We begin with the raw amino-acid sequence, 239 residues long: Methylthioribulose-1-phosphate dehydratase (239 aa).

C94 lines the substrate pocket. Residues H112 and H114 each contribute to the Zn(2+) site. Residue E136 is the Proton donor/acceptor of the active site. H192 serves as a coordination point for Zn(2+).

The protein belongs to the aldolase class II family. MtnB subfamily. Requires Zn(2+) as cofactor.

It localises to the cytoplasm. The catalysed reaction is 5-(methylsulfanyl)-D-ribulose 1-phosphate = 5-methylsulfanyl-2,3-dioxopentyl phosphate + H2O. It functions in the pathway amino-acid biosynthesis; L-methionine biosynthesis via salvage pathway; L-methionine from S-methyl-5-thio-alpha-D-ribose 1-phosphate: step 2/6. In terms of biological role, catalyzes the dehydration of methylthioribulose-1-phosphate (MTRu-1-P) into 2,3-diketo-5-methylthiopentyl-1-phosphate (DK-MTP-1-P). Functions in the methionine salvage pathway. May play a role in apoptosis. This chain is Methylthioribulose-1-phosphate dehydratase, found in Xenopus laevis (African clawed frog).